Reading from the N-terminus, the 762-residue chain is Putative BTB/POZ domain-containing protein L272 (762 aa).

One can recognise a BTB domain in the interval 16-86 (TDITIILKDE…FYGQKIKSHN (71 aa)). Acidic residues predominate over residues 390–410 (DLDNSNDLNDSNDLDDSDDSN). Disordered stretches follow at residues 390–411 (DLDN…DSND) and 532–556 (ISDN…NSDN). The span at 532–543 (ISDNSDNLNNSD) shows a compositional bias: low complexity. A coiled-coil region spans residues 737–762 (FSENYCDELINRLNNALKKIEQKYPN).

The protein belongs to the mimivirus BTB/WD family.

This is Putative BTB/POZ domain-containing protein L272 from Acanthamoeba polyphaga (Amoeba).